Here is a 266-residue protein sequence, read N- to C-terminus: Vitamin B12-binding protein (266 aa).

Residues 1 to 22 (MAKQMFRALVALLLTLPVWLYA) form the signal peptide. A Fe/B12 periplasmic-binding domain is found at 25–266 (RVITLSPANT…QLCNALSQVN (242 aa)). Cyanocob(III)alamin-binding positions include tyrosine 50 and 242–246 (DWFER). Cysteine 183 and cysteine 259 form a disulfide bridge.

It belongs to the BtuF family. As to quaternary structure, the complex is composed of two ATP-binding proteins (BtuD), two transmembrane proteins (BtuC) and a solute-binding protein (BtuF).

It is found in the periplasm. Part of the ABC transporter complex BtuCDF involved in vitamin B12 import. Binds vitamin B12 and delivers it to the periplasmic surface of BtuC. The sequence is that of Vitamin B12-binding protein from Salmonella paratyphi A (strain ATCC 9150 / SARB42).